Reading from the N-terminus, the 201-residue chain is 3-isopropylmalate dehydratase small subunit 1 (201 aa).

It belongs to the LeuD family. LeuD type 1 subfamily. As to quaternary structure, heterodimer of LeuC and LeuD.

The catalysed reaction is (2R,3S)-3-isopropylmalate = (2S)-2-isopropylmalate. The protein operates within amino-acid biosynthesis; L-leucine biosynthesis; L-leucine from 3-methyl-2-oxobutanoate: step 2/4. Catalyzes the isomerization between 2-isopropylmalate and 3-isopropylmalate, via the formation of 2-isopropylmaleate. The protein is 3-isopropylmalate dehydratase small subunit 1 of Salmonella typhimurium (strain LT2 / SGSC1412 / ATCC 700720).